The chain runs to 161 residues: Beta-lactoglobulin-1 (161 aa).

Disulfide bonds link cysteine 66–cysteine 159 and cysteine 106–cysteine 119.

This sequence belongs to the calycin superfamily. Lipocalin family. Monomer. In terms of tissue distribution, synthesized in mammary gland and secreted in milk.

The protein resides in the secreted. Primary component of whey, it binds retinol and is probably involved in the transport of that molecule. The sequence is that of Beta-lactoglobulin-1 (LGB1) from Canis lupus familiaris (Dog).